We begin with the raw amino-acid sequence, 180 residues long: ATP-dependent protease subunit HslV (180 aa).

Threonine 9 is a catalytic residue. Na(+) is bound by residues alanine 164, cysteine 167, and threonine 170.

It belongs to the peptidase T1B family. HslV subfamily. In terms of assembly, a double ring-shaped homohexamer of HslV is capped on each side by a ring-shaped HslU homohexamer. The assembly of the HslU/HslV complex is dependent on binding of ATP.

The protein resides in the cytoplasm. It catalyses the reaction ATP-dependent cleavage of peptide bonds with broad specificity.. With respect to regulation, allosterically activated by HslU binding. Its function is as follows. Protease subunit of a proteasome-like degradation complex believed to be a general protein degrading machinery. In Leptospira interrogans serogroup Icterohaemorrhagiae serovar Lai (strain 56601), this protein is ATP-dependent protease subunit HslV.